We begin with the raw amino-acid sequence, 207 residues long: Outer-membrane lipoprotein LolB (207 aa).

The signal sequence occupies residues 1–21; the sequence is MPLPDFRLIRLLPLAALVLTA. Cys22 carries N-palmitoyl cysteine lipidation. Residue Cys22 is the site of S-diacylglycerol cysteine attachment.

Belongs to the LolB family. In terms of assembly, monomer.

It localises to the cell outer membrane. Functionally, plays a critical role in the incorporation of lipoproteins in the outer membrane after they are released by the LolA protein. The protein is Outer-membrane lipoprotein LolB of Escherichia coli (strain K12 / MC4100 / BW2952).